The chain runs to 122 residues: Large ribosomal subunit protein uL14 (122 aa).

The protein belongs to the universal ribosomal protein uL14 family. Part of the 50S ribosomal subunit. Forms a cluster with proteins L3 and L19. In the 70S ribosome, L14 and L19 interact and together make contacts with the 16S rRNA in bridges B5 and B8.

Functionally, binds to 23S rRNA. Forms part of two intersubunit bridges in the 70S ribosome. This Pseudomonas fluorescens (strain ATCC BAA-477 / NRRL B-23932 / Pf-5) protein is Large ribosomal subunit protein uL14.